The primary structure comprises 334 residues: MLYYVPRREKSYMNIKPHLFGLNRSNRDFSLRETWGKNQFNSSFPVSLCCYMSSKGILANYLSIENAEIKCSSIDIKDVFEIEPENENTFFAFETSHSIKLTALPDHTTCDLTDADFGSEIVIRPDSIVYLACSLAEILKESLANCMDIPNNVDHLDWSEPKQVIPLFPHILSTLNNLCSRADTIQTPFLLQPVWKTLGKSPRLADNCLDIFIWSDVAFVKFILEISNLNVNVLSINRQTRTAIWLYKMLVDIVKYGRFNHHKIIDLCSYNTKNDKAFASSGMITNVFMKSERLERPIIMKSEIKNIILGGGQELLSPERRFDAIIYNSSELFR.

It catalyses the reaction Endonucleolytic cleavage of DNA to give specific double-stranded fragments with terminal 5'-phosphates.. A P subtype restriction enzyme that recognizes the double-stranded sequence 5'-GRCGYC-3'; the cleavage site is unknown. The chain is Probable type II restriction enzyme HindVP (hindVRP) from Haemophilus influenzae (strain ATCC 51907 / DSM 11121 / KW20 / Rd).